The following is a 202-amino-acid chain: NADH:(hydroxy)cinnamate reductase subunit CrdA (202 aa).

The protein belongs to the NADH-dependent flavin reductase family. NADH:(hydroxy)cinnamate reductase Crd is a heterodimer composed of CrdA and CrdB subunits, encoded by adjacent genes. It depends on FMN as a cofactor.

Functionally, component of the NADH:(hydroxy)cinnamate reductase. CrdA is probably reduced by NADH and then transfers the electrons to the catalytic center of CrdB. Is likely involved in protecting V.ruber from (hydroxy)cinnamate poisoning. In Vibrio ruber (strain DSM 16370 / JCM 11486 / BCRC 17186 / CECT 7878 / LMG 23124 / VR1), this protein is NADH:(hydroxy)cinnamate reductase subunit CrdA.